Reading from the N-terminus, the 400-residue chain is Multidrug resistance protein MdtH (400 aa).

Transmembrane regions (helical) follow at residues Y13–I33, S34–L54, P99–F116, L139–L159, L165–L185, V214–V234, A244–A264, F289–L309, L340–G360, and L365–H385.

The protein belongs to the major facilitator superfamily. DHA1 family. MdtH (TC 2.A.1.2.21) subfamily.

It localises to the cell inner membrane. The polypeptide is Multidrug resistance protein MdtH (Proteus mirabilis (strain HI4320)).